Here is a 261-residue protein sequence, read N- to C-terminus: 3-methyl-2-oxobutanoate hydroxymethyltransferase (261 aa).

Residues D47 and D86 each contribute to the Mg(2+) site. Residues 47 to 48 (DS), D86, and K116 each bind 3-methyl-2-oxobutanoate. E118 contacts Mg(2+). Catalysis depends on E186, which acts as the Proton acceptor.

The protein belongs to the PanB family. Homodecamer; pentamer of dimers. Mg(2+) serves as cofactor.

The protein localises to the cytoplasm. The enzyme catalyses 3-methyl-2-oxobutanoate + (6R)-5,10-methylene-5,6,7,8-tetrahydrofolate + H2O = 2-dehydropantoate + (6S)-5,6,7,8-tetrahydrofolate. Its pathway is cofactor biosynthesis; (R)-pantothenate biosynthesis; (R)-pantoate from 3-methyl-2-oxobutanoate: step 1/2. Catalyzes the reversible reaction in which hydroxymethyl group from 5,10-methylenetetrahydrofolate is transferred onto alpha-ketoisovalerate to form ketopantoate. In Thermosynechococcus vestitus (strain NIES-2133 / IAM M-273 / BP-1), this protein is 3-methyl-2-oxobutanoate hydroxymethyltransferase.